Reading from the N-terminus, the 278-residue chain is Energy-coupling factor transporter ATP-binding protein EcfA1 (278 aa).

In terms of domain architecture, ABC transporter spans 5 to 239 (IRVQHLNYTY…GMELLRLGLD (235 aa)). 39-46 (GHNGSGKS) is an ATP binding site. Glutamate 165 functions as the Proton acceptor in the catalytic mechanism.

The protein belongs to the ABC transporter superfamily. Energy-coupling factor EcfA family. As to quaternary structure, forms a stable energy-coupling factor (ECF) transporter complex probably composed of 2 membrane-embedded substrate-binding proteins (S component), 2 ATP-binding proteins (A component) and 2 transmembrane proteins (T component). This complex interacts with a number of substrate-specific components, including FolT and ThiT for 5-formyltetrahydrofolate and thiamine respectively.

It is found in the cell membrane. In terms of biological role, ATP-binding (A) component of a common energy-coupling factor (ECF) ABC-transporter complex. Unlike classic ABC transporters this ECF transporter provides the energy necessary to transport a number of different substrates including 5-formyltetrahydrofolate and thiamine. Expression of the complex plus FolT or ThiT in Lactococcus lactis subsp. cremoris (strain NZ9000) allows 5-formyltetrahydrofolate or thiamine uptake respectively; 5-formyltetrahydrofolate or thiamine are not taken up in the absence of FolT/ThiT or the EcfA1A2T complex. Deenergized L.lactis subsp. cremoris (treated with 2-deoxyglucose) does not take up substrate. This Lacticaseibacillus paracasei (strain ATCC 334 / BCRC 17002 / CCUG 31169 / CIP 107868 / KCTC 3260 / NRRL B-441) (Lactobacillus paracasei) protein is Energy-coupling factor transporter ATP-binding protein EcfA1.